The primary structure comprises 130 residues: Small ribosomal subunit protein uS9 (130 aa).

Over residues T105 to K115 the composition is skewed to basic and acidic residues. The disordered stretch occupies residues T105 to R130. Residues V116–R130 are compositionally biased toward basic residues.

Belongs to the universal ribosomal protein uS9 family.

The protein is Small ribosomal subunit protein uS9 of Buchnera aphidicola subsp. Schizaphis graminum (strain Sg).